The chain runs to 211 residues: 5-formyltetrahydrofolate cyclo-ligase (211 aa).

An ATP-binding site is contributed by 4–8 (KQLLR). Substrate is bound by residues glutamate 56 and 152–156 (HGAGY). ATP is bound by residues 151–158 (GHGAGYYD) and aspartate 194.

This sequence belongs to the 5-formyltetrahydrofolate cyclo-ligase family. Post-translationally, N-glycosylated.

The protein resides in the mitochondrion. The catalysed reaction is (6S)-5-formyl-5,6,7,8-tetrahydrofolate + ATP = (6R)-5,10-methenyltetrahydrofolate + ADP + phosphate. Only enzyme known to utilize 5-formyltetrahydrofolate (folinic acid) as substrate. Contributes to tetrahydrofolate metabolism in an alternative way of folate biosynthesis. May regulate carbon flow through the folate-dependent one-carbon metabolic network that supplies carbon for the biosynthesis of purines, thymidine and amino acids. This chain is 5-formyltetrahydrofolate cyclo-ligase (FAU1), found in Saccharomyces cerevisiae (strain ATCC 204508 / S288c) (Baker's yeast).